Consider the following 429-residue polypeptide: MQIHTSKPAKTVRGEITVPGDKSISHRSIMLGSLARGITTVKGFLRGEDNLATLNAFRAMGIIVHDDGETLKIEGNGLHGLGEPADVLDCGNSGTSMRLMTGLLSGQRFFSVLTGDQYLRKRPMKRVLEPLNLMGATVFGRAGGDKAPLAIVGTSLKGIAYQSPVSSAQVKSAILLAGMYADGETQVTEPHLSRDHSERILRYFGADIETYSGGTRIRGGRELEGREIIVPGDISSAAFFMVAALIVPGSELLIKGVGVNPTRTGIIDILQAMGGDITLQNCRESSGEPVADILVKSSRLKGIEVGGDLVPRAIDEFPVICVAASLAEGKTVIRDAKELRVKETDRIKAMAFNLQKAGVAVVETENGMDVTGMEKLEGCTAESFGDHRIAMSMLIAGLAARDQITVNDTECIGTSFPNFTALLQGVTVI.

The 3-phosphoshikimate site is built by lysine 22, serine 23, and arginine 27. Phosphoenolpyruvate is bound at residue lysine 22. Phosphoenolpyruvate-binding residues include glycine 94 and arginine 122. 3-phosphoshikimate contacts are provided by serine 167, glutamine 169, aspartate 315, and lysine 342. Glutamine 169 is a binding site for phosphoenolpyruvate. Residue aspartate 315 is the Proton acceptor of the active site. Phosphoenolpyruvate is bound by residues arginine 346 and arginine 388.

The protein belongs to the EPSP synthase family. In terms of assembly, monomer.

It is found in the cytoplasm. It catalyses the reaction 3-phosphoshikimate + phosphoenolpyruvate = 5-O-(1-carboxyvinyl)-3-phosphoshikimate + phosphate. It participates in metabolic intermediate biosynthesis; chorismate biosynthesis; chorismate from D-erythrose 4-phosphate and phosphoenolpyruvate: step 6/7. Catalyzes the transfer of the enolpyruvyl moiety of phosphoenolpyruvate (PEP) to the 5-hydroxyl of shikimate-3-phosphate (S3P) to produce enolpyruvyl shikimate-3-phosphate and inorganic phosphate. The polypeptide is 3-phosphoshikimate 1-carboxyvinyltransferase (Geotalea daltonii (strain DSM 22248 / JCM 15807 / FRC-32) (Geobacter daltonii)).